The following is a 484-amino-acid chain: Serine hydroxymethyltransferase, cytosolic (484 aa).

At A2 the chain carries N-acetylalanine. At N6 the chain carries Deamidated asparagine; alternate. The segment at residues 6–7 is a cross-link (isoaspartyl glycine isopeptide (Asn-Gly); alternate); the sequence is NG. Residue C204 is the Nucleophile of the active site. The active-site Proton donor is the H256. An N6-(pyridoxal phosphate)lysine modification is found at K257.

It belongs to the SHMT family. As to quaternary structure, homotetramer. Identified in complex with ABRAXAS2 and the other subunits of the BRISC complex, at least composed of ABRAXAS2, BRCC3/BRCC36, BABAM2 and BABAM1/NBA1. It depends on pyridoxal 5'-phosphate as a cofactor. Post-translationally, deamidation of asparagine produces alternatively aspartate or isoaspartate, which in turn can be converted to aspartate through carboxylmethylation/demethylation.

The protein resides in the cytoplasm. The enzyme catalyses (6R)-5,10-methylene-5,6,7,8-tetrahydrofolate + glycine + H2O = (6S)-5,6,7,8-tetrahydrofolate + L-serine. It functions in the pathway one-carbon metabolism; tetrahydrofolate interconversion. Functionally, interconversion of serine and glycine. The protein is Serine hydroxymethyltransferase, cytosolic (SHMT1) of Oryctolagus cuniculus (Rabbit).